The sequence spans 132 residues: Small ribosomal subunit protein uS12 (132 aa).

Asp89 carries the post-translational modification 3-methylthioaspartic acid. A disordered region spans residues 101–132 (TLDASGAAGPSSTNKATRNRKRSKYGVKRPKA). The span at 117–132 (TRNRKRSKYGVKRPKA) shows a compositional bias: basic residues.

This sequence belongs to the universal ribosomal protein uS12 family. Part of the 30S ribosomal subunit. Contacts proteins S8 and S17. May interact with IF1 in the 30S initiation complex.

With S4 and S5 plays an important role in translational accuracy. Functionally, interacts with and stabilizes bases of the 16S rRNA that are involved in tRNA selection in the A site and with the mRNA backbone. Located at the interface of the 30S and 50S subunits, it traverses the body of the 30S subunit contacting proteins on the other side and probably holding the rRNA structure together. The combined cluster of proteins S8, S12 and S17 appears to hold together the shoulder and platform of the 30S subunit. The chain is Small ribosomal subunit protein uS12 from Sorangium cellulosum (strain So ce56) (Polyangium cellulosum (strain So ce56)).